Here is a 231-residue protein sequence, read N- to C-terminus: Deoxyribose-phosphate aldolase (231 aa).

Asp97 functions as the Proton donor/acceptor in the catalytic mechanism. Lys162 serves as the catalytic Schiff-base intermediate with acetaldehyde. The active-site Proton donor/acceptor is the Lys191.

Belongs to the DeoC/FbaB aldolase family. DeoC type 1 subfamily.

It is found in the cytoplasm. It carries out the reaction 2-deoxy-D-ribose 5-phosphate = D-glyceraldehyde 3-phosphate + acetaldehyde. It participates in carbohydrate degradation; 2-deoxy-D-ribose 1-phosphate degradation; D-glyceraldehyde 3-phosphate and acetaldehyde from 2-deoxy-alpha-D-ribose 1-phosphate: step 2/2. Catalyzes a reversible aldol reaction between acetaldehyde and D-glyceraldehyde 3-phosphate to generate 2-deoxy-D-ribose 5-phosphate. The chain is Deoxyribose-phosphate aldolase from Caldanaerobacter subterraneus subsp. tengcongensis (strain DSM 15242 / JCM 11007 / NBRC 100824 / MB4) (Thermoanaerobacter tengcongensis).